We begin with the raw amino-acid sequence, 430 residues long: Histidine--tRNA ligase (430 aa).

It belongs to the class-II aminoacyl-tRNA synthetase family.

It is found in the cytoplasm. The catalysed reaction is tRNA(His) + L-histidine + ATP = L-histidyl-tRNA(His) + AMP + diphosphate + H(+). The protein is Histidine--tRNA ligase of Metallosphaera sedula (strain ATCC 51363 / DSM 5348 / JCM 9185 / NBRC 15509 / TH2).